The sequence spans 299 residues: Oxygen-dependent coproporphyrinogen-III oxidase (299 aa).

S92 is a substrate binding site. A divalent metal cation contacts are provided by H96 and H106. The active-site Proton donor is H106. 108-110 (NVR) contacts substrate. H145 and H175 together coordinate a divalent metal cation. Residues 240–275 (YVEFNLVWDRGTLFGLQTGGRTESILMSMPPLVRWE) are important for dimerization. 258–260 (GGR) serves as a coordination point for substrate.

Belongs to the aerobic coproporphyrinogen-III oxidase family. As to quaternary structure, homodimer. It depends on a divalent metal cation as a cofactor.

It localises to the cytoplasm. The catalysed reaction is coproporphyrinogen III + O2 + 2 H(+) = protoporphyrinogen IX + 2 CO2 + 2 H2O. It functions in the pathway porphyrin-containing compound metabolism; protoporphyrin-IX biosynthesis; protoporphyrinogen-IX from coproporphyrinogen-III (O2 route): step 1/1. Involved in the heme biosynthesis. Catalyzes the aerobic oxidative decarboxylation of propionate groups of rings A and B of coproporphyrinogen-III to yield the vinyl groups in protoporphyrinogen-IX. This chain is Oxygen-dependent coproporphyrinogen-III oxidase, found in Salmonella typhi.